A 48-amino-acid chain; its full sequence is Light-harvesting polypeptide B-885 beta-2 chain (48 aa).

Over 1-20 (AEDRKSLSGLTEQEAQEFGT) the chain is Cytoplasmic. The chain crosses the membrane as a helical span at residues 21-43 (LYTQGVAFVAVIAIVAHALVWAW). H37 serves as a coordination point for a bacteriochlorophyll. Residues 44-48 (RPWLQ) are Periplasmic-facing.

This sequence belongs to the antenna complex beta subunit family. In terms of assembly, the core complex is formed by different alpha and beta chains, binding bacteriochlorophyll molecules, and arranged most probably in tetrameric structures disposed around the reaction center. The non-pigmented gamma chains may constitute additional components.

It localises to the cell inner membrane. Its function is as follows. Antenna complexes are light-harvesting systems, which transfer the excitation energy to the reaction centers. The sequence is that of Light-harvesting polypeptide B-885 beta-2 chain from Rhodocyclus tenuis (Rhodospirillum tenue).